We begin with the raw amino-acid sequence, 112 residues long: K(+)/H(+) antiporter modulator KhtS (112 aa).

Residues 42 to 64 (YVPMSSYPQETQSAKTPSPGSMH) form a disordered region. Positions 47 to 60 (SYPQETQSAKTPSP) are enriched in polar residues.

The protein resides in the cell membrane. Its function is as follows. Modulates the activity of the potassium/proton antiporter KhtU. Involved in protection of the cell from methylglyoxal, a toxic by-product of glycolysis. The protein is K(+)/H(+) antiporter modulator KhtS of Bacillus subtilis (strain 168).